Consider the following 367-residue polypeptide: Flagellin 2 (367 aa).

Belongs to the bacterial flagellin family.

The protein localises to the secreted. It is found in the bacterial flagellum. Its function is as follows. Flagellin is the subunit protein which polymerizes to form the filaments of bacterial flagella. In Proteus mirabilis, this protein is Flagellin 2 (fliC2).